Consider the following 47-residue polypeptide: PhoP/PhoQ regulator MgrB (47 aa).

A helical transmembrane segment spans residues Trp-6–Ile-26.

The protein belongs to the MgrB family. May form homooligomers. Probably interacts with the periplasmic domain of PhoQ.

It is found in the cell inner membrane. In terms of biological role, phoP-regulated transcription is redox-sensitive, being activated when the periplasm becomes more reducing. MgrB acts between DsbA/DsbB and PhoP/PhoQ in this pathway. Represses PhoP/PhoQ signaling, possibly by binding to the periplasmic domain of PhoQ, altering its activity and that of downstream effector PhoP. This Citrobacter koseri (strain ATCC BAA-895 / CDC 4225-83 / SGSC4696) protein is PhoP/PhoQ regulator MgrB.